The sequence spans 365 residues: Alanine racemase (365 aa).

Lys-32 functions as the Proton acceptor; specific for D-alanine in the catalytic mechanism. The residue at position 32 (Lys-32) is an N6-(pyridoxal phosphate)lysine. Arg-128 serves as a coordination point for substrate. Residue Tyr-257 is the Proton acceptor; specific for L-alanine of the active site. Met-305 contributes to the substrate binding site.

This sequence belongs to the alanine racemase family. Pyridoxal 5'-phosphate serves as cofactor.

It carries out the reaction L-alanine = D-alanine. It functions in the pathway amino-acid biosynthesis; D-alanine biosynthesis; D-alanine from L-alanine: step 1/1. Functionally, catalyzes the interconversion of L-alanine and D-alanine. May also act on other amino acids. In Francisella tularensis subsp. holarctica (strain FTNF002-00 / FTA), this protein is Alanine racemase (alr).